The chain runs to 492 residues: Glutamyl-tRNA(Gln) amidotransferase subunit A (492 aa).

Active-site charge relay system residues include Lys-78 and Ser-158. Ser-182 serves as the catalytic Acyl-ester intermediate.

The protein belongs to the amidase family. GatA subfamily. In terms of assembly, heterotrimer of A, B and C subunits.

It catalyses the reaction L-glutamyl-tRNA(Gln) + L-glutamine + ATP + H2O = L-glutaminyl-tRNA(Gln) + L-glutamate + ADP + phosphate + H(+). Functionally, allows the formation of correctly charged Gln-tRNA(Gln) through the transamidation of misacylated Glu-tRNA(Gln) in organisms which lack glutaminyl-tRNA synthetase. The reaction takes place in the presence of glutamine and ATP through an activated gamma-phospho-Glu-tRNA(Gln). The protein is Glutamyl-tRNA(Gln) amidotransferase subunit A of Orientia tsutsugamushi (strain Boryong) (Rickettsia tsutsugamushi).